Consider the following 364-residue polypeptide: Dimethylsulfoniopropionate demethylase DmdA (364 aa).

The protein belongs to the GcvT family. DmdA subfamily.

It carries out the reaction S,S-dimethyl-beta-propiothetin + (6S)-5,6,7,8-tetrahydrofolate = 3-(methylsulfanyl)propanoate + (6S)-5-methyl-5,6,7,8-tetrahydrofolate + H(+). Involved in the assimilation of dimethylsulphoniopropionate (DMSP), an important compound in the fixation of carbon in marine phytoplankton, by mediating demethylation of dimethylsulfoniopropionate (DMSP) to methyl-mercaptopropionate (MMPA). The intracellular concentration of DMSP is estimated to be 70 mM. This Ruegeria pomeroyi (strain ATCC 700808 / DSM 15171 / DSS-3) (Silicibacter pomeroyi) protein is Dimethylsulfoniopropionate demethylase DmdA.